Here is a 251-residue protein sequence, read N- to C-terminus: tRNA-cytidine(32) 2-sulfurtransferase 1 (251 aa).

The PP-loop motif motif lies at 33 to 38 (SGGKDS). Residues Cys-108, Cys-111, and Cys-199 each coordinate [4Fe-4S] cluster.

It belongs to the TtcA family. As to quaternary structure, homodimer. Requires Mg(2+) as cofactor. [4Fe-4S] cluster is required as a cofactor.

The protein localises to the cytoplasm. The catalysed reaction is cytidine(32) in tRNA + S-sulfanyl-L-cysteinyl-[cysteine desulfurase] + AH2 + ATP = 2-thiocytidine(32) in tRNA + L-cysteinyl-[cysteine desulfurase] + A + AMP + diphosphate + H(+). It participates in tRNA modification. Functionally, catalyzes the ATP-dependent 2-thiolation of cytidine in position 32 of tRNA, to form 2-thiocytidine (s(2)C32). The sulfur atoms are provided by the cysteine/cysteine desulfurase (IscS) system. This chain is tRNA-cytidine(32) 2-sulfurtransferase 1, found in Francisella tularensis subsp. holarctica (strain FTNF002-00 / FTA).